The chain runs to 434 residues: Glutamyl-tRNA reductase (434 aa).

Substrate-binding positions include 49–52 (TCNR), Ser109, 114–116 (EPQ), and Gln120. Cys50 serves as the catalytic Nucleophile. Residue 189 to 194 (GAGEMC) coordinates NADP(+).

It belongs to the glutamyl-tRNA reductase family. As to quaternary structure, homodimer.

It carries out the reaction (S)-4-amino-5-oxopentanoate + tRNA(Glu) + NADP(+) = L-glutamyl-tRNA(Glu) + NADPH + H(+). It functions in the pathway porphyrin-containing compound metabolism; protoporphyrin-IX biosynthesis; 5-aminolevulinate from L-glutamyl-tRNA(Glu): step 1/2. Its function is as follows. Catalyzes the NADPH-dependent reduction of glutamyl-tRNA(Glu) to glutamate 1-semialdehyde (GSA). This chain is Glutamyl-tRNA reductase, found in Trichlorobacter lovleyi (strain ATCC BAA-1151 / DSM 17278 / SZ) (Geobacter lovleyi).